A 517-amino-acid chain; its full sequence is Squalene epoxidase 6 (517 aa).

The next 2 membrane-spanning stretches (helical) occupy residues 3-23 and 45-65; these read FTHVCLWTLVAFVLTWTVFYL and AADVIIVGAGVGGSALAYALA. FAD is bound by residues 55–56, 75–76, R83, F88, R156, V172, D336, and M349; these read VG and ER. The chain crosses the membrane as a helical span at residues 447 to 467; sequence LVYHLCAITLSSIGQLLSPFP.

The protein belongs to the squalene monooxygenase family. The cofactor is FAD. Expressed in seedlings, leaves, stems, inflorescences and siliques.

The protein resides in the membrane. The enzyme catalyses squalene + reduced [NADPH--hemoprotein reductase] + O2 = (S)-2,3-epoxysqualene + oxidized [NADPH--hemoprotein reductase] + H2O + H(+). It participates in terpene metabolism; lanosterol biosynthesis; lanosterol from farnesyl diphosphate: step 2/3. Its function is as follows. Catalyzes the stereospecific oxidation of squalene to (S)-2,3-epoxysqualene, and is considered to be a rate-limiting enzyme in steroid biosynthesis. In Arabidopsis thaliana (Mouse-ear cress), this protein is Squalene epoxidase 6 (SQE6).